The primary structure comprises 323 residues: L-lactate dehydrogenase (323 aa).

Residues Val18, Asp39, Tyr69, and Gly83–Ala84 contribute to the NAD(+) site. Gln86 and Arg92 together coordinate substrate. Residues Ser105, Val122 to Asn124, and Ser147 each bind NAD(+). Residue Asn124–Asp127 participates in substrate binding. Asp152–Arg155 contacts substrate. His179 functions as the Proton acceptor in the catalytic mechanism. Tyr223 bears the Phosphotyrosine mark. Thr232 lines the substrate pocket.

This sequence belongs to the LDH/MDH superfamily. LDH family. Homotetramer.

It is found in the cytoplasm. It carries out the reaction (S)-lactate + NAD(+) = pyruvate + NADH + H(+). It participates in fermentation; pyruvate fermentation to lactate; (S)-lactate from pyruvate: step 1/1. Under neutral conditions, the reaction is stimulated 4-fold by fructose 1,6-bisphosphate (FBP), however the L-lactate dehydrogenase is a nonallosteric enzyme. Calcium and zinc ions at 1 mM stimulate the activity almost 2-fold. Weakly inhibited by cadmium, cobalt and copper ions. Its function is as follows. Catalyzes the conversion of lactate to pyruvate. This is L-lactate dehydrogenase from Lactobacillus helveticus (Lactobacillus suntoryeus).